The chain runs to 129 residues: Small ribosomal subunit protein uS11 (129 aa).

It belongs to the universal ribosomal protein uS11 family. As to quaternary structure, part of the 30S ribosomal subunit. Interacts with proteins S7 and S18. Binds to IF-3.

Located on the platform of the 30S subunit, it bridges several disparate RNA helices of the 16S rRNA. Forms part of the Shine-Dalgarno cleft in the 70S ribosome. The polypeptide is Small ribosomal subunit protein uS11 (Bacillus cereus (strain G9842)).